We begin with the raw amino-acid sequence, 596 residues long: MSTSNDPVVSSHDPIKQEKEQETDLEAQVEHKKRNERGNAFVGFLILIFVYYLLRGGSNDNDKQEMSHSPGSCMDSESAAVSTSAKCYIPPVLTPAKEPKLGDDVSGIDYIRSPEFFNDSLVRFQELLRIPTVCYDDMGDVGDDDRFDIFAVFQDKVRELYPNIFKKLKVEYVNTYGLLITLEGSNKDLKPLVLMGHQDVVPVNQASLDRWYFPPFSATYHNGHVYSRGAADDKNSVVAILEALEILAISDYKPEQTVIASFGFDEEVSGYRGALPLAHKLYERYGKDGVALILDEGGFTINLFGTLFATVCVAEKGYMDVHLKLKTPGGHASIPPPHTNIGLMSKLVTQIEEPFGGELTFENPFYTTLQCFAENSADMDDNLRQLIKSGDTEKMTDLFSKSRLYRYFFETSIAVDVINGGVKVNALPEETTLAVNHRVDASKGLKQVYDRYGGLLEEFGHEYHVNVTLFNGETVVEYEDAIGHIFASTAKTLEPSPVSPYDESSDAYKKLAGAIRYTFGDGTSVTPALMPANTDTRHYWNLTSNIYRWTPVSTNSTSKNSFNGHTINENMRYDAHMDSIEFFYNFILVSDSGEEA.

The interval 1 to 31 (MSTSNDPVVSSHDPIKQEKEQETDLEAQVEH) is disordered. The Cytoplasmic portion of the chain corresponds to 1-37 (MSTSNDPVVSSHDPIKQEKEQETDLEAQVEHKKRNER). Positions 13-22 (DPIKQEKEQE) are enriched in basic and acidic residues. The chain crosses the membrane as a helical span at residues 38–58 (GNAFVGFLILIFVYYLLRGGS). The Lumenal portion of the chain corresponds to 59 to 596 (NDNDKQEMSH…ILVSDSGEEA (538 aa)). A glycan (N-linked (GlcNAc...) asparagine) is linked at N118. H197 contributes to the Zn(2+) binding site. Residue D199 is part of the active site. D232 serves as a coordination point for Zn(2+). E266 functions as the Proton acceptor in the catalytic mechanism. Zn(2+) contacts are provided by E267 and D295. 3 N-linked (GlcNAc...) asparagine glycosylation sites follow: N466, N541, and N555. Zn(2+) is bound at residue H565.

The protein belongs to the peptidase M20A family. Zn(2+) is required as a cofactor.

The protein localises to the vacuole membrane. This is an uncharacterized protein from Schizosaccharomyces pombe (strain 972 / ATCC 24843) (Fission yeast).